The sequence spans 816 residues: Pentatricopeptide repeat-containing protein At5g12100, mitochondrial (816 aa).

A mitochondrion-targeting transit peptide spans 1–39 (MVTRLRLVSRSSRYATVKFTDSVSACSCRRLFSASTDPE). The segment at 34–57 (ASTDPEPESQPEQAPPTNPVTGDE) is disordered. 20 PPR repeats span residues 108-142 (HDFS…GIYP), 143-177 (SSDS…DFRP), 178-212 (SKFM…RIYP), 213-247 (SVFI…RLLP), 248-282 (SLIT…HIEP), 283-317 (SLIT…GFVP), 318-352 (DAFT…GVKM), 353-387 (NAYT…GLVP), 388-422 (NEVI…GMKP), 423-457 (DHLA…GVSP), 458-492 (SVET…GTMP), 493-527 (NVVS…GVSP), 528-562 (KVRI…GIEL), 563-597 (NLVT…GLKP), 598-632 (DVFT…GIKP), 633-662 (TLKT…MSLK), 664-698 (DLLV…SIGL), 699-733 (DKTT…EMEP), 734-768 (EADT…GFLL), and 769-803 (DVCI…MLGD).

It belongs to the PPR family. P subfamily.

It is found in the mitochondrion. This Arabidopsis thaliana (Mouse-ear cress) protein is Pentatricopeptide repeat-containing protein At5g12100, mitochondrial.